The following is a 267-amino-acid chain: Strigolactone esterase D14 (267 aa).

Ser-97 serves as the catalytic Nucleophile. Active-site residues include Asp-218 and His-247.

It belongs to the AB hydrolase superfamily. In terms of assembly, interacts with SMXL6, SMXL7 and SMXL8. The interaction with SMXLs occurs in the presence of (2'R) stereoisomers of strigolactones, but not (2'S) stereoisomers. Interacts with MAX2. Forms a complex with MAX2 and SKP1A/ASK1 in presence of strigolactone. As to expression, expressed at high levels in rosette and cauline leaves and at lower levels in axillary buds, inflorescences, stems, roots and developing vascular tissue of cotyledons.

The protein localises to the cytoplasm. It is found in the nucleus. Its function is as follows. Involved in strigolactone signaling pathway. Does not move long distances acropetally in the plant to regulate shoot branching and is rapidly degraded in the presence of strigolactones. Functions downstream of strigolactone synthesis, as a component of hormone signaling and as an enzyme that participates in the conversion of strigolactones to the bioactive form. Acts probably as a strigolactone receptor. Strigolactones are hormones that inhibit tillering and shoot branching through the MAX-dependent pathway, contribute to the regulation of shoot architectural response to phosphate-limiting conditions and function as rhizosphere signal that stimulates hyphal branching of arbuscular mycorrhizal fungi and trigger seed germination of root parasitic weeds. Hydrolyzes methyl carlactonoate (MeCLA), but not carlactone (CL) or carlactonoic acid (CLA). Hydrolyzes the butenolide ring of strigolactones. The initial nucleophilic attack causes an electron shift, followed by the addition of a water molecule, to lead to the release of the ABC ring product and the formation of a 'Ser-97'-stabilized open lactone intermediate. Has no esterase activity for 4-nitrophenyl butyrate. Binds and hydrolyzes the synthetic strigolactone analog GR24 in vitro. Forms a stable covalent complex with the D-ring of strigolactone, which is essential for hormone bioactivity. The D-ring is attached to His-247 of the catalytic triad. The hydrolysis of strigolactone into a covalently linked intermediate molecule initiates a conformational change of D14 to facilitate interaction with MAX2 and formation of the D14-MAX2-SKP1/ASK1 complex to trigger strigolactone signaling. This mechanism defines D14 as a non-canonical hormone receptor with dual functions to generate and sense the active form of strigolactone. The chain is Strigolactone esterase D14 from Arabidopsis thaliana (Mouse-ear cress).